Reading from the N-terminus, the 152-residue chain is Transcriptional repressor NrdR (152 aa).

Residues 3–34 fold into a zinc finger; that stretch reads CPHCHHNGSRVIDSRPAEDGMSIRRRRECVNC. Positions 49 to 139 constitute an ATP-cone domain; the sequence is LLVVKKDGTR…VYRQFKDVDA (91 aa).

This sequence belongs to the NrdR family. It depends on Zn(2+) as a cofactor.

In terms of biological role, negatively regulates transcription of bacterial ribonucleotide reductase nrd genes and operons by binding to NrdR-boxes. The polypeptide is Transcriptional repressor NrdR (Limosilactobacillus fermentum (strain NBRC 3956 / LMG 18251) (Lactobacillus fermentum)).